The primary structure comprises 71 residues: Small ribosomal subunit protein bS21 (71 aa).

The protein belongs to the bacterial ribosomal protein bS21 family.

In Acidithiobacillus ferrooxidans (strain ATCC 23270 / DSM 14882 / CIP 104768 / NCIMB 8455) (Ferrobacillus ferrooxidans (strain ATCC 23270)), this protein is Small ribosomal subunit protein bS21.